Reading from the N-terminus, the 293-residue chain is Probable aspartoacylase (293 aa).

The Zn(2+) site is built by His14 and Glu17. Substrate is bound by residues Arg56 and 63–64; that span reads NR. A Zn(2+)-binding site is contributed by His106. Substrate-binding residues include Glu165 and Tyr276.

Belongs to the AspA/AstE family. Aspartoacylase subfamily. It depends on Zn(2+) as a cofactor.

The enzyme catalyses an N-acyl-L-aspartate + H2O = a carboxylate + L-aspartate. This is Probable aspartoacylase from Trichodesmium erythraeum (strain IMS101).